The following is a 364-amino-acid chain: Dihydroorotate dehydrogenase (quinone) (364 aa).

FMN-binding positions include 61–65 (AGFDK) and Ser85. Lys65 contacts substrate. Substrate is bound at residue 110-114 (NRMGF). FMN-binding residues include Asn139 and Asn170. Asn170 contributes to the substrate binding site. Catalysis depends on Ser173, which acts as the Nucleophile. Substrate is bound at residue Asn175. Lys214 and Ser242 together coordinate FMN. 243–244 (NT) serves as a coordination point for substrate. Residues Gly266, Gly295, and 316 to 317 (YS) each bind FMN.

Belongs to the dihydroorotate dehydrogenase family. Type 2 subfamily. As to quaternary structure, monomer. FMN serves as cofactor.

The protein localises to the cell membrane. The enzyme catalyses (S)-dihydroorotate + a quinone = orotate + a quinol. The protein operates within pyrimidine metabolism; UMP biosynthesis via de novo pathway; orotate from (S)-dihydroorotate (quinone route): step 1/1. In terms of biological role, catalyzes the conversion of dihydroorotate to orotate with quinone as electron acceptor. This Bradyrhizobium sp. (strain BTAi1 / ATCC BAA-1182) protein is Dihydroorotate dehydrogenase (quinone).